Here is an 895-residue protein sequence, read N- to C-terminus: Serine/threonine-protein kinase-like protein ACR4 (895 aa).

A signal peptide spans 1–29 (MRMFETRAREWILLVKLVLFTSIWQLASA). At 30 to 434 (LGSMSSIAIS…FWSLQLPIAT (405 aa)) the chain is on the extracellular side. A run of 7 repeats spans residues 38–73 (ISYGEGGSVFCGLKSDGSHLVVCYGSNSAILYGTPG), 77–112 (FIGLTGGDGFMCGLLMLSHQPYCWGNSAFIQMGVPQ), 130–167 (LCGLRKPIVGRRKNSNIISSSLVDCWGYNMTRNFVFDK), 169–202 (LHSLSAGSEFNCALSSKDKSVFCWGDENSSQVIS), 210–245 (FQKIAAGGYHVCGILDGLESRVLCWGKSLEFEEEVT), 262–296 (LLAVVGGKFYACGIKRYDHSAVCWGFFVNRSTPAP), and 301–339 (FYDLAAGNYFTCGVLTGTSMSPVCWGLGFPASIPLAVSP). Residues 38–339 (ISYGEGGSVF…PASIPLAVSP (302 aa)) are 7 X 36 AA repeats. Residues asparagine 158 and asparagine 196 are each glycosylated (N-linked (GlcNAc...) asparagine). A glycan (N-linked (GlcNAc...) asparagine) is linked at asparagine 290. Residues 346 to 395 (PCPPGTHELSNQENSPCKFTGSHICLPCSTSCPPGMYQKSVCTERSDQVC) form a TNFR-Cys repeat. 3 disulfides stabilise this stretch: cysteine 347–cysteine 370, cysteine 373–cysteine 387, and cysteine 377–cysteine 395. 2 N-linked (GlcNAc...) asparagine glycosylation sites follow: asparagine 398 and asparagine 410. Residues 435 to 455 (AEIGFALFLVAVVSITAALYI) form a helical membrane-spanning segment. Over 456 to 895 (RYRLRNCRCS…GQSLFLHHNF (440 aa)) the chain is Cytoplasmic. Position 475 is a phosphoserine (serine 475). A Protein kinase domain is found at 512–789 (FKEESIVGKG…KVTTALERAL (278 aa)). ATP-binding positions include 518–526 (VGKGSFSCV) and lysine 540. Aspartate 641 acts as the Proton acceptor in catalysis. The tract at residues 818-895 (SWRIGSKRSG…GQSLFLHHNF (78 aa)) is disordered. Residues 865-877 (EGRKQQEALRSLE) show a composition bias toward basic and acidic residues.

The protein belongs to the protein kinase superfamily. Ser/Thr protein kinase family. In terms of assembly, homodimer. Interacts with PP2A3. Post-translationally, autophosphorylated and phosphorylated by ALE2. In terms of tissue distribution, expressed in seedlings, floral buds, siliques, leaves, shoot apical meristems (SAM), and, to a lower extent, in roots.

The protein resides in the cell membrane. It localises to the endosome. It is found in the multivesicular body membrane. The enzyme catalyses L-seryl-[protein] + ATP = O-phospho-L-seryl-[protein] + ADP + H(+). It catalyses the reaction L-threonyl-[protein] + ATP = O-phospho-L-threonyl-[protein] + ADP + H(+). Functionally, controls formative cell division in meristems, including root tips and lateral root initiation zones of the pericycle, in response to CLE40 signal. Acts with CLE40p peptide as a ligand-receptor pair in a signal transduction pathway, coordinating movement of the root tip and organization of cell divisions in the root meristem. Required during embryogenesis and development, probably for the differentiation of protoderm and epidermal cells. Involved in the regulation of cellular organization during the development of sepal margins and ovule integument outgrowth and promotes giant cell formation. Can phosphorylate ALE2. The sequence is that of Serine/threonine-protein kinase-like protein ACR4 from Arabidopsis thaliana (Mouse-ear cress).